The primary structure comprises 73 residues: Translation initiation factor IF-1 (73 aa).

An S1-like domain is found at 1–72 (MAKEDAIEVE…NRGRITYRSK (72 aa)).

The protein belongs to the IF-1 family. Component of the 30S ribosomal translation pre-initiation complex which assembles on the 30S ribosome in the order IF-2 and IF-3, IF-1 and N-formylmethionyl-tRNA(fMet); mRNA recruitment can occur at any time during PIC assembly.

The protein resides in the cytoplasm. Its function is as follows. One of the essential components for the initiation of protein synthesis. Stabilizes the binding of IF-2 and IF-3 on the 30S subunit to which N-formylmethionyl-tRNA(fMet) subsequently binds. Helps modulate mRNA selection, yielding the 30S pre-initiation complex (PIC). Upon addition of the 50S ribosomal subunit IF-1, IF-2 and IF-3 are released leaving the mature 70S translation initiation complex. The sequence is that of Translation initiation factor IF-1 from Syntrophobacter fumaroxidans (strain DSM 10017 / MPOB).